The following is a 279-amino-acid chain: DegV domain-containing protein lin1977 (279 aa).

In terms of domain architecture, DegV spans isoleucine 4–threonine 278. Hexadecanoate is bound by residues serine 62 and serine 94.

Its function is as follows. May bind long-chain fatty acids, such as palmitate, and may play a role in lipid transport or fatty acid metabolism. The sequence is that of DegV domain-containing protein lin1977 from Listeria innocua serovar 6a (strain ATCC BAA-680 / CLIP 11262).